The chain runs to 437 residues: GTPase Obg (437 aa).

The 159-residue stretch at 2–160 folds into the Obg domain; the sequence is SMFLDTAKIS…RQLELELKIL (159 aa). Residues 161 to 338 enclose the OBG-type G domain; that stretch reads ADVGLVGFPS…LLEATAELLA (178 aa). Residues 167 to 174, 192 to 196, 214 to 217, 284 to 287, and 319 to 321 contribute to the GTP site; these read GFPSVGKS, FTTIV, DLPG, NKMD, and SSL. 2 residues coordinate Mg(2+): S174 and T194. The 79-residue stretch at 359–437 folds into the OCT domain; that stretch reads GFAETEKDFE…IGKFEFEFVD (79 aa).

It belongs to the TRAFAC class OBG-HflX-like GTPase superfamily. OBG GTPase family. Monomer. Requires Mg(2+) as cofactor.

It is found in the cytoplasm. In terms of biological role, an essential GTPase which binds GTP, GDP and possibly (p)ppGpp with moderate affinity, with high nucleotide exchange rates and a fairly low GTP hydrolysis rate. Plays a role in control of the cell cycle, stress response, ribosome biogenesis and in those bacteria that undergo differentiation, in morphogenesis control. This Streptococcus pyogenes serotype M4 (strain MGAS10750) protein is GTPase Obg.